The chain runs to 428 residues: Adenylosuccinate synthetase (428 aa).

Residues 12–18 (GDEGKGK) and 40–42 (GHT) contribute to the GTP site. The active-site Proton acceptor is Asp-13. Residues Asp-13 and Gly-40 each contribute to the Mg(2+) site. IMP contacts are provided by residues 13-16 (DEGK), 38-41 (NAGH), Thr-130, Arg-144, Gln-225, Thr-240, and Arg-304. The active-site Proton donor is the His-41. A substrate-binding site is contributed by 300 to 306 (VTTGRAR). Residues Arg-306, 332–334 (KID), and 414–416 (SVG) each bind GTP.

It belongs to the adenylosuccinate synthetase family. As to quaternary structure, homodimer. The cofactor is Mg(2+).

It is found in the cytoplasm. It catalyses the reaction IMP + L-aspartate + GTP = N(6)-(1,2-dicarboxyethyl)-AMP + GDP + phosphate + 2 H(+). Its pathway is purine metabolism; AMP biosynthesis via de novo pathway; AMP from IMP: step 1/2. Functionally, plays an important role in the de novo pathway of purine nucleotide biosynthesis. Catalyzes the first committed step in the biosynthesis of AMP from IMP. This chain is Adenylosuccinate synthetase, found in Clostridium botulinum (strain 657 / Type Ba4).